Reading from the N-terminus, the 337-residue chain is Major envelope glycoprotein (337 aa).

N-linked (GlcNAc...) asparagine; by host glycans are attached at residues Asn-76, Asn-114, Asn-271, and Asn-301.

Belongs to the baculoviridae gp64 family. Palmitoylated.

It localises to the virion membrane. Its subcellular location is the host cell membrane. In terms of biological role, envelope phosphoglycoprotein which mediates the fusion of viral and host endosomal membranes leading to virus entry into the host cell. This is Major envelope glycoprotein (GP67) from Lepidoptera (butterflies and moths).